A 320-amino-acid polypeptide reads, in one-letter code: Cytochrome f (320 aa).

Positions 1–35 (MENRNTFSWVKEQMTRSISVSIMIYVITQTSISNA) are cleaved as a signal peptide. Positions 36, 56, 59, and 60 each coordinate heme. Residues 286-306 (VQGLLFFFASVILAQVFLVLK) form a helical membrane-spanning segment.

This sequence belongs to the cytochrome f family. As to quaternary structure, the 4 large subunits of the cytochrome b6-f complex are cytochrome b6, subunit IV (17 kDa polypeptide, petD), cytochrome f and the Rieske protein, while the 4 small subunits are PetG, PetL, PetM and PetN. The complex functions as a dimer. Requires heme as cofactor.

Its subcellular location is the plastid. The protein localises to the chloroplast thylakoid membrane. Its function is as follows. Component of the cytochrome b6-f complex, which mediates electron transfer between photosystem II (PSII) and photosystem I (PSI), cyclic electron flow around PSI, and state transitions. The sequence is that of Cytochrome f from Agrostis stolonifera (Creeping bentgrass).